The sequence spans 691 residues: DNA ligase (691 aa).

Residues 56-60, 104-105, and Glu-139 each bind NAD(+); these read DRAYD and SI. Residue Lys-141 is the N6-AMP-lysine intermediate of the active site. NAD(+) contacts are provided by Arg-162, Glu-198, Lys-314, and Lys-338. Zn(2+)-binding residues include Cys-429, Cys-432, Cys-445, and Cys-451. Residues 607-691 form the BRCT domain; sequence TAGDALSGQT…SLLESHGIEI (85 aa).

The protein belongs to the NAD-dependent DNA ligase family. LigA subfamily. It depends on Mg(2+) as a cofactor. The cofactor is Mn(2+).

It catalyses the reaction NAD(+) + (deoxyribonucleotide)n-3'-hydroxyl + 5'-phospho-(deoxyribonucleotide)m = (deoxyribonucleotide)n+m + AMP + beta-nicotinamide D-nucleotide.. In terms of biological role, DNA ligase that catalyzes the formation of phosphodiester linkages between 5'-phosphoryl and 3'-hydroxyl groups in double-stranded DNA using NAD as a coenzyme and as the energy source for the reaction. It is essential for DNA replication and repair of damaged DNA. This is DNA ligase from Natronomonas pharaonis (strain ATCC 35678 / DSM 2160 / CIP 103997 / JCM 8858 / NBRC 14720 / NCIMB 2260 / Gabara) (Halobacterium pharaonis).